Consider the following 419-residue polypeptide: UPF0329 protein ECU07_1890/ECU10_0010 (419 aa).

Positions 136-165 (RQRKREEETERSVKELVGDEEKAKSKEEKA) are enriched in basic and acidic residues. Residues 136–222 (RQRKREEETE…KGGKKKSKGG (87 aa)) form a disordered region. A compositionally biased stretch (basic residues) spans 213 to 222 (KGGKKKSKGG).

Belongs to the UPF0329 family.

The protein is UPF0329 protein ECU07_1890/ECU10_0010 of Encephalitozoon cuniculi (strain GB-M1) (Microsporidian parasite).